The following is a 258-amino-acid chain: Caffeoyl-CoA O-methyltransferase 1 (258 aa).

Over residues 1–16 (MATTATEAAPAQEQQA) the composition is skewed to low complexity. Residues 1–31 (MATTATEAAPAQEQQANGNGEQKTRHSEVGH) form a disordered region. Basic and acidic residues predominate over residues 22 to 31 (QKTRHSEVGH). Lysine 32 is a binding site for substrate. S-adenosyl-L-methionine is bound by residues threonine 74, glutamate 96, 98 to 99 (GV), serine 104, aspartate 122, and alanine 151. Aspartate 174 provides a ligand contact to substrate. Aspartate 174 contacts a divalent metal cation. Aspartate 176 is a binding site for S-adenosyl-L-methionine. A divalent metal cation is bound by residues aspartate 200 and asparagine 201. Asparagine 205 lines the substrate pocket.

This sequence belongs to the class I-like SAM-binding methyltransferase superfamily. Cation-dependent O-methyltransferase family. CCoAMT subfamily. The cofactor is a divalent metal cation.

It catalyses the reaction (E)-caffeoyl-CoA + S-adenosyl-L-methionine = (E)-feruloyl-CoA + S-adenosyl-L-homocysteine + H(+). It functions in the pathway aromatic compound metabolism; phenylpropanoid biosynthesis. In terms of biological role, methylates caffeoyl-CoA to feruloyl-CoA and 5-hydroxyferuloyl-CoA to sinapoyl-CoA. Plays a role in the synthesis of feruloylated polysaccharides. Involved in the reinforcement of the plant cell wall. Also involved in the responding to wounding or pathogen challenge by the increased formation of cell wall-bound ferulic acid polymers. The sequence is that of Caffeoyl-CoA O-methyltransferase 1 (CCOAOMT1) from Zea mays (Maize).